The primary structure comprises 121 residues: Large ribosomal subunit protein bL21c (121 aa).

It belongs to the bacterial ribosomal protein bL21 family. In terms of assembly, part of the 50S ribosomal subunit.

Its subcellular location is the plastid. The protein resides in the chloroplast. This protein binds to 23S rRNA. The sequence is that of Large ribosomal subunit protein bL21c from Chaetosphaeridium globosum (Charophycean green alga).